A 607-amino-acid chain; its full sequence is Elongation factor 4 (607 aa).

One can recognise a tr-type G domain in the interval 11-193 (EKIRNFSIIA…QIVEKVPAPT (183 aa)). GTP is bound by residues 23 to 28 (DHGKST) and 140 to 143 (NKID).

It belongs to the TRAFAC class translation factor GTPase superfamily. Classic translation factor GTPase family. LepA subfamily.

The protein localises to the cell membrane. It carries out the reaction GTP + H2O = GDP + phosphate + H(+). In terms of biological role, required for accurate and efficient protein synthesis under certain stress conditions. May act as a fidelity factor of the translation reaction, by catalyzing a one-codon backward translocation of tRNAs on improperly translocated ribosomes. Back-translocation proceeds from a post-translocation (POST) complex to a pre-translocation (PRE) complex, thus giving elongation factor G a second chance to translocate the tRNAs correctly. Binds to ribosomes in a GTP-dependent manner. This chain is Elongation factor 4, found in Streptococcus pneumoniae (strain Hungary19A-6).